Consider the following 768-residue polypeptide: Phosphoribosylformylglycinamidine synthase subunit PurL (768 aa).

The active site involves H48. ATP is bound by residues Y51 and K90. E92 is a Mg(2+) binding site. Substrate is bound by residues 93–96 (SHNH) and R115. H94 acts as the Proton acceptor in catalysis. Mg(2+) is bound at residue D116. Q239 is a binding site for substrate. D267 is a Mg(2+) binding site. A substrate-binding site is contributed by 311–313 (ESQ). Residues D507 and G544 each contribute to the ATP site. Position 545 (N545) interacts with Mg(2+). S547 lines the substrate pocket.

The protein belongs to the FGAMS family. As to quaternary structure, monomer. Part of the FGAM synthase complex composed of 1 PurL, 1 PurQ and 2 PurS subunits.

The protein localises to the cytoplasm. It carries out the reaction N(2)-formyl-N(1)-(5-phospho-beta-D-ribosyl)glycinamide + L-glutamine + ATP + H2O = 2-formamido-N(1)-(5-O-phospho-beta-D-ribosyl)acetamidine + L-glutamate + ADP + phosphate + H(+). The protein operates within purine metabolism; IMP biosynthesis via de novo pathway; 5-amino-1-(5-phospho-D-ribosyl)imidazole from N(2)-formyl-N(1)-(5-phospho-D-ribosyl)glycinamide: step 1/2. In terms of biological role, part of the phosphoribosylformylglycinamidine synthase complex involved in the purines biosynthetic pathway. Catalyzes the ATP-dependent conversion of formylglycinamide ribonucleotide (FGAR) and glutamine to yield formylglycinamidine ribonucleotide (FGAM) and glutamate. The FGAM synthase complex is composed of three subunits. PurQ produces an ammonia molecule by converting glutamine to glutamate. PurL transfers the ammonia molecule to FGAR to form FGAM in an ATP-dependent manner. PurS interacts with PurQ and PurL and is thought to assist in the transfer of the ammonia molecule from PurQ to PurL. In Parasynechococcus marenigrum (strain WH8102), this protein is Phosphoribosylformylglycinamidine synthase subunit PurL.